The primary structure comprises 229 residues: Putative N-acetylmannosamine-6-phosphate 2-epimerase (229 aa).

This sequence belongs to the NanE family.

The catalysed reaction is an N-acyl-D-glucosamine 6-phosphate = an N-acyl-D-mannosamine 6-phosphate. It functions in the pathway amino-sugar metabolism; N-acetylneuraminate degradation; D-fructose 6-phosphate from N-acetylneuraminate: step 3/5. Its function is as follows. Converts N-acetylmannosamine-6-phosphate (ManNAc-6-P) to N-acetylglucosamine-6-phosphate (GlcNAc-6-P). This chain is Putative N-acetylmannosamine-6-phosphate 2-epimerase, found in Shigella flexneri serotype 5b (strain 8401).